The sequence spans 647 residues: Threonine--tRNA ligase (647 aa).

The 61-residue stretch at 1-61 folds into the TGS domain; the sequence is MIKITFPDGA…EEDGSIEIVT (61 aa). The interval 240 to 538 is catalytic; the sequence is DHRKLGKELD…LIETYKGAFP (299 aa). 3 residues coordinate Zn(2+): Cys334, His385, and His515.

Belongs to the class-II aminoacyl-tRNA synthetase family. Homodimer. The cofactor is Zn(2+).

The protein localises to the cytoplasm. It catalyses the reaction tRNA(Thr) + L-threonine + ATP = L-threonyl-tRNA(Thr) + AMP + diphosphate + H(+). Catalyzes the attachment of threonine to tRNA(Thr) in a two-step reaction: L-threonine is first activated by ATP to form Thr-AMP and then transferred to the acceptor end of tRNA(Thr). Also edits incorrectly charged L-seryl-tRNA(Thr). This Streptococcus pyogenes serotype M49 (strain NZ131) protein is Threonine--tRNA ligase.